Here is a 352-residue protein sequence, read N- to C-terminus: Uroporphyrinogen decarboxylase (352 aa).

Substrate-binding positions include 27-31 (RQAGR), Asp-77, Tyr-154, Thr-209, and His-325.

Belongs to the uroporphyrinogen decarboxylase family. Homodimer.

It is found in the cytoplasm. The enzyme catalyses uroporphyrinogen III + 4 H(+) = coproporphyrinogen III + 4 CO2. The protein operates within porphyrin-containing compound metabolism; protoporphyrin-IX biosynthesis; coproporphyrinogen-III from 5-aminolevulinate: step 4/4. In terms of biological role, catalyzes the decarboxylation of four acetate groups of uroporphyrinogen-III to yield coproporphyrinogen-III. This Legionella pneumophila (strain Corby) protein is Uroporphyrinogen decarboxylase.